Consider the following 75-residue polypeptide: UPF0291 protein LMOf2365_1322 (75 aa).

A disordered region spans residues 56–75 (DPNGTDVTPHKVKQLRKNKH). Basic residues predominate over residues 65–75 (HKVKQLRKNKH).

This sequence belongs to the UPF0291 family.

It localises to the cytoplasm. This is UPF0291 protein LMOf2365_1322 from Listeria monocytogenes serotype 4b (strain F2365).